Consider the following 198-residue polypeptide: uncharacterized protein (198 aa).

The C4-type zinc finger occupies 9–43; that stretch reads CPVCGGKGTFVITSHQIDIPYFGPVLETTMICEKC.

Belongs to the ZPR1 family.

This is an uncharacterized protein from Methanocaldococcus jannaschii (strain ATCC 43067 / DSM 2661 / JAL-1 / JCM 10045 / NBRC 100440) (Methanococcus jannaschii).